The chain runs to 100 residues: Defensin-B4 (100 aa).

Residues 1–22 form the signal peptide; sequence MRASLLLFILLVYLAHAPQAQG. Positions 23-26 are excised as a propeptide; sequence VFGP. 3 disulfide bridges follow: Cys-29-Cys-56, Cys-36-Cys-50, and Cys-40-Cys-57. Positions 60–100 are disordered; it reads STGTSSSQGSHEVPVINSEPALESKPEPQDTQEEEATMVSE. Residues 89-100 show a composition bias toward acidic residues; it reads DTQEEEATMVSE.

The protein belongs to the beta-defensin family. In terms of tissue distribution, highly expressed in kidney, lowly expressed in spleen, and expressed at lower levels in lung.

The protein localises to the secreted. In terms of biological role, has antimicrobial activity. The chain is Defensin-B4 from Ornithorhynchus anatinus (Duckbill platypus).